The following is a 359-amino-acid chain: Peptide chain release factor 1 (359 aa).

Q235 bears the N5-methylglutamine mark.

It belongs to the prokaryotic/mitochondrial release factor family. Post-translationally, methylated by PrmC. Methylation increases the termination efficiency of RF1.

The protein localises to the cytoplasm. Functionally, peptide chain release factor 1 directs the termination of translation in response to the peptide chain termination codons UAG and UAA. The sequence is that of Peptide chain release factor 1 from Chelativorans sp. (strain BNC1).